Reading from the N-terminus, the 449-residue chain is Rubisco accumulation factor 1.2, chloroplastic (449 aa).

The transit peptide at 1-61 (MFSLKSLISS…NMIPKNPPAR (61 aa)) directs the protein to the chloroplast. The segment at 75–264 (IPTQFRSLDS…KAKNRLNTEL (190 aa)) is N-terminal alpha-helix. Positions 262 to 288 (TELYGDKEAEKEKEKKKKEEEVKAIRI) form a coiled coil. Positions 288–434 (IPVVRLKFGE…GMVVLVVRPP (147 aa)) are C-terminal beta sheet.

This sequence belongs to the RAF family. Homodimer.

The protein resides in the plastid. Its subcellular location is the chloroplast. Functionally, required for assembly or stability of RuBisCO. Acts at a postchaperonin step to fold and/or assemble the large subunit (rbcL) into RuBisCO. RAF1 brackets an rbcL dimer (rbcL(2)), leading to rbcL(8)-RAF1(4) complex formation. In the next step, RBCS displaces RAF1, thus resulting in holoenzyme formation. The sequence is that of Rubisco accumulation factor 1.2, chloroplastic from Arabidopsis thaliana (Mouse-ear cress).